The following is a 163-amino-acid chain: S-fimbrial adhesin protein SfaS (163 aa).

A signal peptide spans Met1–Ala22. Cys38 and Cys75 are joined by a disulfide. The tract at residues Lys138–Lys144 is involved in sialic acid binding.

This sequence belongs to the fimbrial protein family.

It is found in the fimbrium. Its function is as follows. Fimbriae (also called pili), polar filaments radiating from the surface of the bacterium to a length of 0.5-1.5 micrometers and numbering 100-300 per cell, enable bacteria to colonize the epithelium of specific host organs. A minor fimbrial subunit, this protein is necessary for full expression of S-specific binding. S-fimbrial adhesins enable pathogenic E.coli causing urinary-tract infections or newborn meningitis to attach to glycoproteins terminating with alpha-sialic acid-(2-3)-beta-Gal. This protein binds to the alpha-sialic acid-(2-3)-beta-Gal and is thus responsible for erythrocyte recognition and hemagglutination. In Escherichia coli O6:K15:H31 (strain 536 / UPEC), this protein is S-fimbrial adhesin protein SfaS (sfaS).